A 448-amino-acid chain; its full sequence is MAHIKFDYSKLTPFVAENELDEIQWQIDGAAKLLHEGKGAGSDYIGWLDLPEDYDKEEFARIQKAAKKIQSDSEVLIVIGIGGSYLGARAAIDFLSNSFVNLQTAEERKAPRILYAGNSISSSYLADLVDYVADKDFSVNVISKSGTTTEPAIAFRVFEEMLVKKYGREEANKRIYATTDKEKGAVKVNADANNWETFVVPDSVGGRFSVLTAVGLLPIAASGADITALMEGANAARKEYTSTNVHENDAYAYAALRNILYRKGKFSEILINYEPSLQYFSEWWKQLAGESEGKDQKGIYPTSANFSTDLHSLGQWIQEGTRTVFETAIRIEKPRKNINIPELDADLDGLGYLQGKDVDFVNKKAADGVLLAHTDGNVPNMIVTLPEQDEFTLGYAIYFFELAIGVSGYLNGINPFNQPGVEAYKKNMFALLGKPGFEELSKELNDRL.

The active-site Proton donor is the E290. Residues H311 and K425 contribute to the active site.

It belongs to the GPI family.

It is found in the cytoplasm. The catalysed reaction is alpha-D-glucose 6-phosphate = beta-D-fructose 6-phosphate. It functions in the pathway carbohydrate biosynthesis; gluconeogenesis. The protein operates within carbohydrate degradation; glycolysis; D-glyceraldehyde 3-phosphate and glycerone phosphate from D-glucose: step 2/4. Its function is as follows. Catalyzes the reversible isomerization of glucose-6-phosphate to fructose-6-phosphate. The protein is Glucose-6-phosphate isomerase of Lactococcus lactis subsp. lactis (strain IL1403) (Streptococcus lactis).